A 142-amino-acid polypeptide reads, in one-letter code: Multiprotein-bridging factor 1a (142 aa).

Over residues 51–64 (GTNKAASSGTSLNT) the composition is skewed to polar residues. Positions 51–77 (GTNKAASSGTSLNTKMLDDDTENLTHE) are disordered. Positions 87–141 (IMQARTDKKLTQSQLAQIINEKPQVIQEYESGKAIPNQQILSKLERALGAKLRGK) constitute an HTH cro/C1-type domain. The segment at residues 98–117 (QSQLAQIINEKPQVIQEYES) is a DNA-binding region (H-T-H motif).

Belongs to the MBF1 family. As to expression, expressed in leaves, roots, stems, flowers, siliques and shoots. Detected only in anthers and some seeds in siliques.

It is found in the nucleus. It localises to the nucleolus. Transcriptional coactivator that stimulates transcriptional activity by bridging regulatory proteins and TBP, thereby recruiting TBP to promoters occupied by DNA-binding regulators. The polypeptide is Multiprotein-bridging factor 1a (MBF1A) (Arabidopsis thaliana (Mouse-ear cress)).